The following is a 623-amino-acid chain: tRNA uridine 5-carboxymethylaminomethyl modification enzyme MnmG (623 aa).

12–17 (GAGHAG) contributes to the FAD binding site. Residue 272-286 (GPRYCPSIEDKINRF) coordinates NAD(+).

The protein belongs to the MnmG family. In terms of assembly, homodimer. Heterotetramer of two MnmE and two MnmG subunits. FAD serves as cofactor.

The protein resides in the cytoplasm. Its function is as follows. NAD-binding protein involved in the addition of a carboxymethylaminomethyl (cmnm) group at the wobble position (U34) of certain tRNAs, forming tRNA-cmnm(5)s(2)U34. This is tRNA uridine 5-carboxymethylaminomethyl modification enzyme MnmG from Flavobacterium johnsoniae (strain ATCC 17061 / DSM 2064 / JCM 8514 / BCRC 14874 / CCUG 350202 / NBRC 14942 / NCIMB 11054 / UW101) (Cytophaga johnsonae).